The following is a 396-amino-acid chain: Elongation factor Tu (396 aa).

Residues 10 to 206 (KPHLNIGTIG…AVDENVPDPV (197 aa)) enclose the tr-type G domain. A G1 region spans residues 19–26 (GHVDHGKT). 19–26 (GHVDHGKT) is a GTP binding site. T26 provides a ligand contact to Mg(2+). The tract at residues 62 to 66 (GITIN) is G2. The tract at residues 83-86 (DAPG) is G3. GTP is bound by residues 83–87 (DAPGH) and 138–141 (NKSD). The G4 stretch occupies residues 138–141 (NKSD). A G5 region spans residues 176–178 (SAL).

Belongs to the TRAFAC class translation factor GTPase superfamily. Classic translation factor GTPase family. EF-Tu/EF-1A subfamily. In terms of assembly, monomer.

The protein resides in the cytoplasm. The catalysed reaction is GTP + H2O = GDP + phosphate + H(+). In terms of biological role, GTP hydrolase that promotes the GTP-dependent binding of aminoacyl-tRNA to the A-site of ribosomes during protein biosynthesis. The polypeptide is Elongation factor Tu (Kocuria rhizophila (strain ATCC 9341 / DSM 348 / NBRC 103217 / DC2201)).